Consider the following 279-residue polypeptide: Putative hydro-lyase GDI0188/Gdia_2258 (279 aa).

This sequence belongs to the D-glutamate cyclase family.

The polypeptide is Putative hydro-lyase GDI0188/Gdia_2258 (Gluconacetobacter diazotrophicus (strain ATCC 49037 / DSM 5601 / CCUG 37298 / CIP 103539 / LMG 7603 / PAl5)).